The primary structure comprises 255 residues: Glutamate racemase (255 aa).

Residues 7–8 (DS) and 39–40 (YG) contribute to the substrate site. The active-site Proton donor/acceptor is cysteine 70. 71 to 72 (NT) provides a ligand contact to substrate. The Proton donor/acceptor role is filled by cysteine 181. 182-183 (TH) provides a ligand contact to substrate.

This sequence belongs to the aspartate/glutamate racemases family. As to quaternary structure, homodimer.

It carries out the reaction L-glutamate = D-glutamate. It functions in the pathway cell wall biogenesis; peptidoglycan biosynthesis. Functionally, provides the (R)-glutamate required for cell wall biosynthesis. The sequence is that of Glutamate racemase from Helicobacter pylori (strain J99 / ATCC 700824) (Campylobacter pylori J99).